A 208-amino-acid chain; its full sequence is Small ribosomal subunit protein uS4 (208 aa).

Residues 95-157 (RRIDNVVYRA…DSLKKLVRSN (63 aa)) form the S4 RNA-binding domain.

It belongs to the universal ribosomal protein uS4 family. In terms of assembly, part of the 30S ribosomal subunit. Contacts protein S5. The interaction surface between S4 and S5 is involved in control of translational fidelity.

Functionally, one of the primary rRNA binding proteins, it binds directly to 16S rRNA where it nucleates assembly of the body of the 30S subunit. With S5 and S12 plays an important role in translational accuracy. The chain is Small ribosomal subunit protein uS4 from Borrelia hermsii (strain HS1 / DAH).